The sequence spans 1101 residues: Isoleucine--tRNA ligase (1101 aa).

The short motif at 50–60 (PFANGLPHYGH) is the 'HIGH' region element. Positions 629–633 (KLSKR) match the 'KMSKS' region motif. Residue lysine 632 participates in ATP binding.

It belongs to the class-I aminoacyl-tRNA synthetase family. IleS type 2 subfamily. In terms of assembly, monomer. Requires Zn(2+) as cofactor.

The protein localises to the cytoplasm. The catalysed reaction is tRNA(Ile) + L-isoleucine + ATP = L-isoleucyl-tRNA(Ile) + AMP + diphosphate. In terms of biological role, catalyzes the attachment of isoleucine to tRNA(Ile). As IleRS can inadvertently accommodate and process structurally similar amino acids such as valine, to avoid such errors it has two additional distinct tRNA(Ile)-dependent editing activities. One activity is designated as 'pretransfer' editing and involves the hydrolysis of activated Val-AMP. The other activity is designated 'posttransfer' editing and involves deacylation of mischarged Val-tRNA(Ile). In Anaplasma marginale (strain St. Maries), this protein is Isoleucine--tRNA ligase.